The primary structure comprises 219 residues: tRNA (guanine-N(7)-)-methyltransferase (219 aa).

4 residues coordinate S-adenosyl-L-methionine: E46, E71, N100, and D122. The active site involves D122. Residues K126, D158, and T199–E202 each bind substrate.

This sequence belongs to the class I-like SAM-binding methyltransferase superfamily. TrmB family.

It carries out the reaction guanosine(46) in tRNA + S-adenosyl-L-methionine = N(7)-methylguanosine(46) in tRNA + S-adenosyl-L-homocysteine. It participates in tRNA modification; N(7)-methylguanine-tRNA biosynthesis. Catalyzes the formation of N(7)-methylguanine at position 46 (m7G46) in tRNA. The protein is tRNA (guanine-N(7)-)-methyltransferase of Leuconostoc mesenteroides subsp. mesenteroides (strain ATCC 8293 / DSM 20343 / BCRC 11652 / CCM 1803 / JCM 6124 / NCDO 523 / NBRC 100496 / NCIMB 8023 / NCTC 12954 / NRRL B-1118 / 37Y).